The primary structure comprises 211 residues: Ribosomal RNA small subunit methyltransferase G (211 aa).

S-adenosyl-L-methionine-binding positions include Gly73, 126–127 (IE), and Arg142.

Belongs to the methyltransferase superfamily. RNA methyltransferase RsmG family.

It is found in the cytoplasm. The catalysed reaction is guanosine(527) in 16S rRNA + S-adenosyl-L-methionine = N(7)-methylguanosine(527) in 16S rRNA + S-adenosyl-L-homocysteine. Functionally, specifically methylates the N7 position of guanine in position 527 of 16S rRNA. In Methylorubrum extorquens (strain PA1) (Methylobacterium extorquens), this protein is Ribosomal RNA small subunit methyltransferase G.